Here is a 352-residue protein sequence, read N- to C-terminus: Deoxyhypusine synthase-like protein (352 aa).

Belongs to the deoxyhypusine synthase family.

The sequence is that of Deoxyhypusine synthase-like protein from Coxiella burnetii (strain Dugway 5J108-111).